A 999-amino-acid chain; its full sequence is Hypoxia up-regulated protein 1 (999 aa).

Residues 1–32 (MAATVRRQRPRRLLCWALVAVLLADLLALSDT) form the signal peptide. Asn-155, Asn-222, and Asn-515 each carry an N-linked (GlcNAc...) asparagine glycan. Ser-567 is subject to Phosphoserine. Residues 567–694 (SPEEESTLTK…KKPKPARKQK (128 aa)) form a disordered region. The span at 574–583 (LTKLGNTISS) shows a compositional bias: polar residues. N-linked (GlcNAc...) asparagine glycosylation occurs at Asn-596. Basic and acidic residues-rich tracts occupy residues 611–626 (GSKDEPAEQGELKEEA) and 641–668 (PKGDAAREGEKPDEKESGDKPEAQKPNE). Positions 669–680 (KGQAGPEGAAPA) are enriched in low complexity. N-linked (GlcNAc...) asparagine glycosylation is found at Asn-830, Asn-862, and Asn-869. An N6-acetyllysine modification is found at Lys-883. Residues 909 to 999 (AKFTKPRPRP…QKRPSKNDEL (91 aa)) form a disordered region. Residues Asn-922 and Asn-931 are each glycosylated (N-linked (GlcNAc...) asparagine). The span at 949-962 (EEAKPILEPDKEET) shows a compositional bias: basic and acidic residues. Positions 996-999 (NDEL) match the Prevents secretion from ER motif.

It belongs to the heat shock protein 70 family. As to quaternary structure, part of a large chaperone multiprotein complex comprising DNAJB11, HSP90B1, HSPA5, HYOU, PDIA2, PDIA4, PDIA6, PPIB, SDF2L1, UGGT1 and very small amounts of ERP29, but not, or at very low levels, CALR nor CANX.

The protein resides in the endoplasmic reticulum lumen. Has a pivotal role in cytoprotective cellular mechanisms triggered by oxygen deprivation. Promotes HSPA5/BiP-mediated ATP nucleotide exchange and thereby activates the unfolded protein response (UPR) pathway in the presence of endoplasmic reticulum stress. May play a role as a molecular chaperone and participate in protein folding. This is Hypoxia up-regulated protein 1 (Hyou1) from Mus musculus (Mouse).